The chain runs to 253 residues: MEQFKGLQKSLYIWTDNAELDKRVEQLKTATGGEVALENVHRLSFASYASSSFDLIVIECAQLTDNYVKLLHMLKPSGKLHLISFIGAAGSLLQEIKLSGFINCSEDSDNTLTAEKPGYETGSSARLSFAKKNSSTLNVWKISGDDDELIDEEDLLDEVDKQKPDPASLKVCSTTGKRKACKNCSCGLADELENEKKQENAAKQASTENAKSSCGNCYLGDAFRCSSCPYLGMPAFKPGEKVQLVDNLLKSDI.

The segment at 4-129 (FKGLQKSLYI…ETGSSARLSF (126 aa)) is N-terminal SAM-like domain. Residues 130–161 (AKKNSSTLNVWKISGDDDELIDEEDLLDEVDK) are linker. [2Fe-2S] cluster contacts are provided by Cys172, Cys181, Cys184, and Cys186. Positions 172-186 (CSTTGKRKACKNCSC) are fe-S binding site A. Positions 214, 217, 225, and 228 each coordinate [4Fe-4S] cluster. Short sequence motifs (cx2C motif) lie at residues 214 to 217 (CGNC) and 225 to 228 (CSSC). A fe-S binding site B region spans residues 214–228 (CGNCYLGDAFRCSSC).

It belongs to the anamorsin family. In terms of assembly, monomer. Requires [2Fe-2S] cluster as cofactor. It depends on [4Fe-4S] cluster as a cofactor.

The protein resides in the cytoplasm. Its subcellular location is the mitochondrion intermembrane space. Component of the cytosolic iron-sulfur (Fe-S) protein assembly (CIA) machinery. Required for the maturation of extramitochondrial Fe-S proteins. Part of an electron transfer chain functioning in an early step of cytosolic Fe-S biogenesis, facilitating the de novo assembly of a [4Fe-4S] cluster on the cytosolic Fe-S scaffold complex. Electrons are transferred from NADPH via a FAD- and FMN-containing diflavin oxidoreductase. Together with the diflavin oxidoreductase, also required for the assembly of the diferric tyrosyl radical cofactor of ribonucleotide reductase (RNR), probably by providing electrons for reduction during radical cofactor maturation in the catalytic small subunit. The protein is Anamorsin homolog of Drosophila willistoni (Fruit fly).